The sequence spans 468 residues: Trigger factor (468 aa).

Residues 162–243 enclose the PPIase FKBP-type domain; that stretch reads GDVLTLDLQA…VSQVAARELP (82 aa). The tract at residues 428-468 is disordered; that stretch reads NGEIVDLDDEEDEETEAAEADATEAADAEKADDKAEEKTEG. Over residues 432–453 the composition is skewed to acidic residues; the sequence is VDLDDEEDEETEAAEADATEAA. Residues 454–468 show a composition bias toward basic and acidic residues; sequence DAEKADDKAEEKTEG.

This sequence belongs to the FKBP-type PPIase family. Tig subfamily.

The protein localises to the cytoplasm. It carries out the reaction [protein]-peptidylproline (omega=180) = [protein]-peptidylproline (omega=0). Involved in protein export. Acts as a chaperone by maintaining the newly synthesized protein in an open conformation. Functions as a peptidyl-prolyl cis-trans isomerase. The chain is Trigger factor from Streptomyces coelicolor (strain ATCC BAA-471 / A3(2) / M145).